The sequence spans 84 residues: UPF0248 protein PF1300 (84 aa).

It belongs to the UPF0248 family.

This Pyrococcus furiosus (strain ATCC 43587 / DSM 3638 / JCM 8422 / Vc1) protein is UPF0248 protein PF1300.